A 310-amino-acid polypeptide reads, in one-letter code: Transcription initiation factor IIB (310 aa).

A TFIIB-type zinc finger spans residues 9–41 (DKQTVCPECGSTELIGDYERAEVVCAHCGLVID). The Zn(2+) site is built by cysteine 14, cysteine 17, cysteine 33, and cysteine 36. 2 repeat units span residues 127 to 210 (SELD…TREL) and 221 to 302 (DYVP…ELTE).

Belongs to the TFIIB family.

Functionally, stabilizes TBP binding to an archaeal box-A promoter. Also responsible for recruiting RNA polymerase II to the pre-initiation complex (DNA-TBP-TFIIB). This chain is Transcription initiation factor IIB, found in Methanobrevibacter smithii (strain ATCC 35061 / DSM 861 / OCM 144 / PS).